The sequence spans 215 residues: MSNETKQPEQGEEYLVPVERYMAAAVRLGARVSNNYLQERGFIFSVRPDGLRIFNLKRIDERIRIAARMITRYPPSRVMVHSTKPYAFKPIQMFCKFVGCLPVTGRLIPGTLTNPYLTHHIDIDLLMVADPKTDFQAINEASLTGIPVIALVDTDSDPTFIDLMIPCNNKGRNSLALVFWLLARQVLRERGELKPNEDLPVSWEEFRVPVGQSRS.

It belongs to the universal ribosomal protein uS2 family.

The sequence is that of Small ribosomal subunit protein uS2 from Caldivirga maquilingensis (strain ATCC 700844 / DSM 13496 / JCM 10307 / IC-167).